The primary structure comprises 222 residues: Putative germin-like protein subfamily 1 member 9 (222 aa).

Residues 1–22 form the signal peptide; it reads MKSFSFLAVLSILAITLSLSKA. An intrachain disulfide couples cysteine 32 to cysteine 49. The 151-residue stretch at 63 to 213 folds into the Cupin type-1 domain; that stretch reads TGLHEARPPN…AFQVDPKIVM (151 aa). Asparagine 78 is a glycosylation site (N-linked (GlcNAc...) asparagine). Residues histidine 111, histidine 113, glutamate 118, and histidine 159 each coordinate Mn(2+).

It belongs to the germin family. In terms of assembly, oligomer (believed to be a pentamer but probably hexamer).

It localises to the secreted. The protein resides in the extracellular space. Its subcellular location is the apoplast. May play a role in plant defense. Probably has no oxalate oxidase activity even if the active site is conserved. The chain is Putative germin-like protein subfamily 1 member 9 from Arabidopsis thaliana (Mouse-ear cress).